A 104-amino-acid chain; its full sequence is Replication factor A protein 3 (104 aa).

The protein belongs to the replication factor A protein 3 family. As to quaternary structure, component of the heterotrimeric canonical replication protein A complex (RPA).

Its subcellular location is the nucleus. As part of the replication protein A (RPA/RP-A), a single-stranded DNA-binding heterotrimeric complex, may play an essential role in DNA replication, recombination and repair. Binds and stabilizes single-stranded DNA intermediates, preventing complementary DNA reannealing and recruiting different proteins involved in DNA metabolism. The protein is Replication factor A protein 3 (ssb3) of Schizosaccharomyces pombe (strain 972 / ATCC 24843) (Fission yeast).